We begin with the raw amino-acid sequence, 492 residues long: GTPase Obg (492 aa).

In terms of domain architecture, Obg spans Pro-2–Val-159. The region spanning Ala-160 to Ser-340 is the OBG-type G domain. GTP contacts are provided by residues Gly-166–Ser-173, Phe-191–Val-195, Asp-212–Gly-215, Asn-292–Asp-295, and Ser-321–Val-323. Positions 173 and 193 each coordinate Mg(2+). Positions Pro-358–Pro-438 constitute an OCT domain. Positions Ser-449–Thr-492 are disordered. Composition is skewed to basic and acidic residues over residues Thr-453–Lys-469 and Arg-476–Thr-492.

Belongs to the TRAFAC class OBG-HflX-like GTPase superfamily. OBG GTPase family. Monomer. The cofactor is Mg(2+).

The protein resides in the cytoplasm. Functionally, an essential GTPase which binds GTP, GDP and possibly (p)ppGpp with moderate affinity, with high nucleotide exchange rates and a fairly low GTP hydrolysis rate. Plays a role in control of the cell cycle, stress response, ribosome biogenesis and in those bacteria that undergo differentiation, in morphogenesis control. In Mycobacterium avium (strain 104), this protein is GTPase Obg.